The sequence spans 165 residues: CDP-archaeol synthase (165 aa).

3 helical membrane-spanning segments follow: residues 4 to 24 (IVQLFLLIWPPYVANGSAVLA), 78 to 98 (LLDAFLLATAAIVGDLLGAFV), and 118 to 138 (FLLMALLVYSLYRELHIPLLL).

It belongs to the CDP-archaeol synthase family. Mg(2+) serves as cofactor.

It is found in the cell membrane. The catalysed reaction is 2,3-bis-O-(geranylgeranyl)-sn-glycerol 1-phosphate + CTP + H(+) = CDP-2,3-bis-O-(geranylgeranyl)-sn-glycerol + diphosphate. It participates in membrane lipid metabolism; glycerophospholipid metabolism. In terms of biological role, catalyzes the formation of CDP-2,3-bis-(O-geranylgeranyl)-sn-glycerol (CDP-archaeol) from 2,3-bis-(O-geranylgeranyl)-sn-glycerol 1-phosphate (DGGGP) and CTP. This reaction is the third ether-bond-formation step in the biosynthesis of archaeal membrane lipids. The sequence is that of CDP-archaeol synthase from Pyrobaculum calidifontis (strain DSM 21063 / JCM 11548 / VA1).